The following is a 543-amino-acid chain: Cyclohexanone 1,2-monooxygenase (543 aa).

Residues phenylalanine 16, aspartate 37, tryptophan 46, aspartate 57, tyrosine 63, and valine 110 each contribute to the FAD site.

Belongs to the FAD-binding monooxygenase family. FAD is required as a cofactor.

It carries out the reaction cyclohexanone + NADPH + O2 + H(+) = hexano-6-lactone + NADP(+) + H2O. This Acinetobacter sp protein is Cyclohexanone 1,2-monooxygenase.